The primary structure comprises 557 residues: Calcium-dependent protein kinase 4 (557 aa).

Positions 1 to 72 (MGNTCRGSIG…LVSPRKASMN (72 aa)) are disordered. Gly2 is lipidated: N-myristoyl glycine. A compositionally biased stretch (polar residues) spans 15–27 (QGYTQPEDSSCST). The segment covering 28–48 (NHNPSSGNSYSSSDNFSPTSN) has biased composition (low complexity). One can recognise a Protein kinase domain in the interval 94-352 (YTLGRKLGQG…AHEVLCHPWI (259 aa)). Residues 100–108 (LGQGQFGTT) and Lys123 each bind ATP. The Proton acceptor role is filled by Asp218. Residues 358 to 388 (APDRALDPAVLSRLKQFSAMNKLKKMALRVI) are autoinhibitory domain. 4 EF-hand domains span residues 395-430 (EEIA…YGST), 431-466 (LKDT…LNKL), 467-502 (EREE…HNMT), and 506-536 (FEDI…GNPC). 19 residues coordinate Ca(2+): Asp408, Asp410, Ser412, Glu419, Asp444, Asp446, Ser448, Thr450, Glu455, Asp480, Asp482, Ser484, Tyr486, Glu491, Asp514, Asp516, Asp518, Arg520, and Glu525.

It belongs to the protein kinase superfamily. Ser/Thr protein kinase family. CDPK subfamily.

It localises to the membrane. It carries out the reaction L-seryl-[protein] + ATP = O-phospho-L-seryl-[protein] + ADP + H(+). The catalysed reaction is L-threonyl-[protein] + ATP = O-phospho-L-threonyl-[protein] + ADP + H(+). Its activity is regulated as follows. Activated by calcium. Autophosphorylation may play an important role in the regulation of the kinase activity. Functionally, regulates the production of reactive oxygen species (ROS) by NADPH oxidase. The sequence is that of Calcium-dependent protein kinase 4 (CPK4) from Solanum tuberosum (Potato).